The following is a 484-amino-acid chain: 6-phosphogluconate dehydrogenase, decarboxylating (484 aa).

NADP(+)-binding positions include 11 to 16 (GLAVMG), 34 to 36 (NRT), 76 to 78 (VRA), and Asn-104. Substrate is bound by residues Asn-104 and 130 to 132 (SGG). The active-site Proton acceptor is Lys-185. 188–189 (HN) serves as a coordination point for substrate. The active-site Proton donor is the Glu-192. Tyr-193, Lys-262, Arg-289, Arg-447, and His-453 together coordinate substrate.

This sequence belongs to the 6-phosphogluconate dehydrogenase family. As to quaternary structure, homodimer.

It catalyses the reaction 6-phospho-D-gluconate + NADP(+) = D-ribulose 5-phosphate + CO2 + NADPH. The protein operates within carbohydrate degradation; pentose phosphate pathway; D-ribulose 5-phosphate from D-glucose 6-phosphate (oxidative stage): step 3/3. In terms of biological role, catalyzes the oxidative decarboxylation of 6-phosphogluconate to ribulose 5-phosphate and CO(2), with concomitant reduction of NADP to NADPH. In Aggregatibacter actinomycetemcomitans (Actinobacillus actinomycetemcomitans), this protein is 6-phosphogluconate dehydrogenase, decarboxylating.